The chain runs to 475 residues: Ubiquitin carboxyl-terminal hydrolase calypso (475 aa).

Positions 44-275 (GWLELESDPG…IRFNLMAVVP (232 aa)) constitute a UCH catalytic domain. The active-site Nucleophile is Cys-130. His-212 serves as the catalytic Proton donor. A coiled-coil region spans residues 333–360 (AKDLQLLLKNLDTEIAINEQNLADENDR). Residues 374–402 (NYDKFICTFLSMLAHQGVLGELVSQHLLP) form the ULD domain. The positively charged C-terminal tail required for binding nucleosomes stretch occupies residues 404–475 (KKVSGQSAAN…KGRNKCRKRK (72 aa)). Residues 411-475 (AANRISKQNS…KGRNKCRKRK (65 aa)) are disordered. The span at 419 to 460 (NSAASSAGANAGAAAGVTPKSQQQQQQPQTAASKNGKSPGKT) shows a compositional bias: low complexity. A compositionally biased stretch (basic residues) spans 461-475 (PGRRRKGRNKCRKRK).

This sequence belongs to the peptidase C12 family. BAP1 subfamily. As to quaternary structure, catalytic component of the polycomb repressive deubiquitinase (PR-DUB) complex, at least composed of caly/calypso, Asx and sba (MBD5/6 homolog). The PR-DUB complex associates with nucleosomes to mediate deubiquitination of histone H2AK118ub1 substrates; the association requires the positively charged C-terminal tail of caly, probably due to direct binding of DNA. Interacts (via ULD domain) with Asx (via DEUBAD domain); the interaction produces a stable heterodimer with a composite binding site for ubiquitin. Homodimerizes (via coiled-coil hinge-region between the UCH and ULD domains) to mediate assembly of 2 copies of the caly-Asx heterodimer into a bisymmetric tetramer; dimerization enhances PR-DUB association with nucleosomes.

Its subcellular location is the nucleus. The catalysed reaction is Thiol-dependent hydrolysis of ester, thioester, amide, peptide and isopeptide bonds formed by the C-terminal Gly of ubiquitin (a 76-residue protein attached to proteins as an intracellular targeting signal).. In terms of biological role, catalytic component of the polycomb repressive deubiquitinase (PR-DUB) complex, a complex that specifically mediates deubiquitination of histone H2A monoubiquitinated at 'Lys-119' (H2AK118ub1). Mediates bisymmetric organization of the PR-DUB complex and is involved in association with nucleosomes to mediate deubiquitination. Does not deubiquitinate monoubiquitinated histone H2B. Required to maintain the transcriptionally repressive state of homeotic genes throughout development. The PR-DUB complex has weak or no activity toward 'Lys-48'- and 'Lys-63'-linked polyubiquitin chains. Polycomb group (PcG) protein. This Drosophila persimilis (Fruit fly) protein is Ubiquitin carboxyl-terminal hydrolase calypso.